The chain runs to 107 residues: MAGGYGVMGDDGSIDYTVHEAWNEATNVYLIVILVSFGLFMYAKRNKRRIMRIFSVPPTEETLSEPNFYDTISKIRLRQQLEMYSISRKYDYQQPQNQADSVQLSLE.

A helical transmembrane segment spans residues 25-43; that stretch reads ATNVYLIVILVSFGLFMYA.

This sequence belongs to the SMIM19 family.

The protein resides in the membrane. This Homo sapiens (Human) protein is Small integral membrane protein 19 (SMIM19).